The chain runs to 351 residues: Protein IQ-DOMAIN 27 (351 aa).

The interval 15–37 (KKSKDRSHVSGGDSVKGGDHSGD) is disordered. The calmodulin-binding stretch occupies residues 98–114 (EERWAAVKIQKVFRGSL). IQ domains lie at 99 to 127 (ERWA…GIVK) and 128 to 150 (LQAL…SIQT). The short motif at 191 to 198 (DRRTKIVE) is the Nuclear localization signal element. Residues 299–310 (SFKAKVRSHSAP) show a composition bias toward basic residues. A disordered region spans residues 299–351 (SFKAKVRSHSAPRQRSERQRLSLDEVMASKSSVSGVSMSHQHPPRHSCSCDPL). Basic and acidic residues predominate over residues 312-321 (QRSERQRLSL). The span at 324-337 (VMASKSSVSGVSMS) shows a compositional bias: low complexity.

This sequence belongs to the IQD family. Binds to multiple calmodulin (CaM) in the presence of Ca(2+) and CaM-like proteins.

The protein resides in the nucleus. Its subcellular location is the nucleus envelope. It localises to the cytoplasm. It is found in the cytoskeleton. Its function is as follows. May be involved in cooperative interactions with calmodulins or calmodulin-like proteins. Recruits calmodulin proteins to microtubules, thus being a potential scaffold in cellular signaling and trafficking. May associate with nucleic acids and regulate gene expression at the transcriptional or post-transcriptional level. The chain is Protein IQ-DOMAIN 27 from Arabidopsis thaliana (Mouse-ear cress).